A 169-amino-acid chain; its full sequence is ALK and LTK ligand 2a (169 aa).

Positions 1 to 25 are cleaved as a signal peptide; that stretch reads MRALRAPVLVMGLVLLICTAAQSDA. The disordered stretch occupies residues 45–68; the sequence is ENSADDESAQKTESAPEPKDTHHL. Residues 52–67 are compositionally biased toward basic and acidic residues; the sequence is SAQKTESAPEPKDTHH. Cystine bridges form between C130/C166 and C144/C153.

It belongs to the ALKAL family. In terms of assembly, homodimer. As to expression, expressed at high level in the notochord and iridophore stripes of the trunk, as well as in the eye and swim bladder.

The protein resides in the secreted. It localises to the cell membrane. Cytokine that acts as a physiological ligand for receptor tyrosine kinases LTK and ALK. Required for neural crest cell differentiation and iridophore development during embryonic iridophore development and adult stripe development by acting as a receptor for LTK. In Danio rerio (Zebrafish), this protein is ALK and LTK ligand 2a.